The chain runs to 456 residues: Glycine--tRNA ligase (456 aa).

Substrate-binding residues include Arg98 and Glu168. Residues 200-202 (RNE), 210-215 (FRTREF), 285-286 (EL), and 329-332 (GVER) contribute to the ATP site. Substrate is bound at residue 215–219 (FEQME). Position 325-329 (325-329 (EPSVG)) interacts with substrate.

This sequence belongs to the class-II aminoacyl-tRNA synthetase family. In terms of assembly, homodimer.

It is found in the cytoplasm. It catalyses the reaction tRNA(Gly) + glycine + ATP = glycyl-tRNA(Gly) + AMP + diphosphate. Catalyzes the attachment of glycine to tRNA(Gly). The polypeptide is Glycine--tRNA ligase (Mycoplasma capricolum subsp. capricolum (strain California kid / ATCC 27343 / NCTC 10154)).